Consider the following 396-residue polypeptide: ATP-dependent RNA helicase eIF4A (396 aa).

Residues 23-51 (YEFDDMNLNEKLLRGVFGYGFNKPSAIQQ) carry the Q motif motif. One can recognise a Helicase ATP-binding domain in the interval 54-223 (IMPIIEGNDV…AKFMQNPVRI (170 aa)). 67-74 (AQSGTGKT) is an ATP binding site. The DEAD box signature appears at 171-174 (DEAD). A Helicase C-terminal domain is found at 234–395 (GIKQFYVNVE…ELPSDIGTLF (162 aa)).

The protein belongs to the DEAD box helicase family. eIF4A subfamily. As to quaternary structure, component of the eIF4F complex, which composition varies with external and internal environmental conditions. It is composed of at least eIF4A, eIF4E and eIF4G.

The protein resides in the cytoplasm. The enzyme catalyses ATP + H2O = ADP + phosphate + H(+). Its function is as follows. ATP-dependent RNA helicase which is a subunit of the eIF4F complex involved in cap recognition and is required for mRNA binding to ribosome. In the current model of translation initiation, eIF4A unwinds RNA secondary structures in the 5'-UTR of mRNAs which is necessary to allow efficient binding of the small ribosomal subunit, and subsequent scanning for the initiator codon. The polypeptide is ATP-dependent RNA helicase eIF4A (TIF1) (Candida glabrata (strain ATCC 2001 / BCRC 20586 / JCM 3761 / NBRC 0622 / NRRL Y-65 / CBS 138) (Yeast)).